A 166-amino-acid chain; its full sequence is Putative universal stress protein SE_1385 (166 aa).

This sequence belongs to the universal stress protein A family.

The protein localises to the cytoplasm. The sequence is that of Putative universal stress protein SE_1385 from Staphylococcus epidermidis (strain ATCC 12228 / FDA PCI 1200).